A 115-amino-acid polypeptide reads, in one-letter code: Integration host factor subunit alpha (115 aa).

Belongs to the bacterial histone-like protein family. In terms of assembly, heterodimer of an alpha and a beta chain.

Its function is as follows. This protein is one of the two subunits of integration host factor, a specific DNA-binding protein that functions in genetic recombination as well as in transcriptional and translational control. In Burkholderia pseudomallei (strain K96243), this protein is Integration host factor subunit alpha.